Consider the following 152-residue polypeptide: Large ribosomal subunit protein bL9 (152 aa).

The protein belongs to the bacterial ribosomal protein bL9 family.

In terms of biological role, binds to the 23S rRNA. This Streptococcus thermophilus (strain CNRZ 1066) protein is Large ribosomal subunit protein bL9.